We begin with the raw amino-acid sequence, 773 residues long: Probable dipeptidyl peptidase 4 (773 aa).

Residues 1 to 18 form the signal peptide; the sequence is MKLSVLSVLLVSVAQAAA. N-linked (GlcNAc...) asparagine glycosylation is found at Asn37, Asn80, Asn112, Asn220, Asn471, and Asn496. Ser619 acts as the Charge relay system in catalysis. A glycan (N-linked (GlcNAc...) asparagine) is linked at Asn671. Residues Asp696 and His731 each act as charge relay system in the active site.

Belongs to the peptidase S9B family.

Its subcellular location is the secreted. It catalyses the reaction Release of an N-terminal dipeptide, Xaa-Yaa-|-Zaa-, from a polypeptide, preferentially when Yaa is Pro, provided Zaa is neither Pro nor hydroxyproline.. Extracellular dipeptidyl-peptidase which removes N-terminal dipeptides sequentially from polypeptides having unsubstituted N-termini provided that the penultimate residue is proline. In Emericella nidulans (strain FGSC A4 / ATCC 38163 / CBS 112.46 / NRRL 194 / M139) (Aspergillus nidulans), this protein is Probable dipeptidyl peptidase 4 (dpp4).